The sequence spans 354 residues: Polyribonucleotide 5'-hydroxyl-kinase PF0112 (354 aa).

36-43 (GDVDTGKT) is an ATP binding site.

The cofactor is a divalent metal cation.

It catalyses the reaction a 5'-end dephospho-2'-deoxyribonucleoside-DNA + ATP = a 5'-end 5'-phospho-2'-deoxyribonucleoside-DNA + ADP + H(+). The catalysed reaction is a 5'-end dephospho-ribonucleoside-RNA + ATP = a 5'-end 5'-phospho-ribonucleoside-RNA + ADP + H(+). Its function is as follows. Polynucleotide kinase that can phosphorylate the 5'-hydroxyl groups of both single-stranded RNA (ssRNA) and single-stranded DNA (ssDNA). Exhibits a strong preference for ssRNA. This chain is Polyribonucleotide 5'-hydroxyl-kinase PF0112, found in Pyrococcus furiosus (strain ATCC 43587 / DSM 3638 / JCM 8422 / Vc1).